A 487-amino-acid chain; its full sequence is Cytochrome P450 2C5 (487 aa).

Heme is bound at residue Cys-432.

It belongs to the cytochrome P450 family. Heme is required as a cofactor.

Its subcellular location is the endoplasmic reticulum membrane. It is found in the microsome membrane. It catalyses the reaction an organic molecule + reduced [NADPH--hemoprotein reductase] + O2 = an alcohol + oxidized [NADPH--hemoprotein reductase] + H2O + H(+). Cytochromes P450 are a group of heme-thiolate monooxygenases. In liver microsomes, this enzyme is involved in an NADPH-dependent electron transport pathway. It oxidizes a variety of structurally unrelated compounds, including steroids, fatty acids, and xenobiotics. This chain is Cytochrome P450 2C5 (CYP2C5), found in Oryctolagus cuniculus (Rabbit).